Reading from the N-terminus, the 404-residue chain is CCA-adding enzyme (404 aa).

2 residues coordinate ATP: G32 and R35. Residues G32 and R35 each coordinate CTP. Mg(2+) contacts are provided by D45 and D47. Residues R116, D159, R162, R165, and R168 each coordinate ATP. CTP contacts are provided by R116, D159, R162, R165, and R168.

The protein belongs to the tRNA nucleotidyltransferase/poly(A) polymerase family. Bacterial CCA-adding enzyme type 3 subfamily. In terms of assembly, homodimer. Requires Mg(2+) as cofactor.

It catalyses the reaction a tRNA precursor + 2 CTP + ATP = a tRNA with a 3' CCA end + 3 diphosphate. The enzyme catalyses a tRNA with a 3' CCA end + 2 CTP + ATP = a tRNA with a 3' CCACCA end + 3 diphosphate. Catalyzes the addition and repair of the essential 3'-terminal CCA sequence in tRNAs without using a nucleic acid template. Adds these three nucleotides in the order of C, C, and A to the tRNA nucleotide-73, using CTP and ATP as substrates and producing inorganic pyrophosphate. tRNA 3'-terminal CCA addition is required both for tRNA processing and repair. Also involved in tRNA surveillance by mediating tandem CCA addition to generate a CCACCA at the 3' terminus of unstable tRNAs. While stable tRNAs receive only 3'-terminal CCA, unstable tRNAs are marked with CCACCA and rapidly degraded. This Ligilactobacillus salivarius (strain UCC118) (Lactobacillus salivarius) protein is CCA-adding enzyme.